We begin with the raw amino-acid sequence, 242 residues long: Probable transcriptional regulatory protein lhv_0777 (242 aa).

A disordered region spans residues 1–22 (MSGHSKWHNIQGRKNAQDAKRG).

It belongs to the TACO1 family.

The protein resides in the cytoplasm. This chain is Probable transcriptional regulatory protein lhv_0777, found in Lactobacillus helveticus (strain DPC 4571).